The sequence spans 147 residues: Spermidine export protein MdtJ (147 aa).

The next 4 membrane-spanning stretches (helical) occupy residues 1–21 (MIYW…TLSM), 31–51 (TGHV…SLAV), 54–74 (VALG…ITIF), and 81–101 (ETLS…ILLV). The segment covering 105–117 (TRKPKQPNRHRGN) has biased composition (basic residues). Residues 105-147 (TRKPKQPNRHRGNRPPSVQGLKTQTTGHHKGVAVESGEHHAAA) form a disordered region.

Belongs to the drug/metabolite transporter (DMT) superfamily. Small multidrug resistance (SMR) (TC 2.A.7.1) family. MdtJ subfamily. In terms of assembly, forms a complex with MdtI.

It localises to the cell inner membrane. Its function is as follows. Catalyzes the excretion of spermidine. This chain is Spermidine export protein MdtJ, found in Yersinia pseudotuberculosis serotype IB (strain PB1/+).